We begin with the raw amino-acid sequence, 352 residues long: Fe(3+) ions import ATP-binding protein FbpC (352 aa).

One can recognise an ABC transporter domain in the interval 5–239 (LHIGHLSKSF…PADLDAALFI (235 aa)). ATP is bound at residue 37–44 (GASGCGKT).

This sequence belongs to the ABC transporter superfamily. Fe(3+) ion importer (TC 3.A.1.10) family. The complex is composed of two ATP-binding proteins (FbpC), two transmembrane proteins (FbpB) and a solute-binding protein (FbpA).

The protein localises to the cell inner membrane. The enzyme catalyses Fe(3+)(out) + ATP + H2O = Fe(3+)(in) + ADP + phosphate + H(+). In terms of biological role, part of the ABC transporter complex FbpABC involved in Fe(3+) ions import. Responsible for energy coupling to the transport system. This chain is Fe(3+) ions import ATP-binding protein FbpC, found in Neisseria meningitidis serogroup A / serotype 4A (strain DSM 15465 / Z2491).